We begin with the raw amino-acid sequence, 432 residues long: 3-phosphoshikimate 1-carboxyvinyltransferase (432 aa).

Residues K23, S24, and R28 each contribute to the 3-phosphoshikimate site. K23 provides a ligand contact to phosphoenolpyruvate. The phosphoenolpyruvate site is built by G95 and R123. 3-phosphoshikimate-binding residues include S167, Q169, D317, and K344. Phosphoenolpyruvate is bound at residue Q169. D317 acts as the Proton acceptor in catalysis. Phosphoenolpyruvate is bound by residues R348 and R390.

The protein belongs to the EPSP synthase family. Monomer.

The protein resides in the cytoplasm. It carries out the reaction 3-phosphoshikimate + phosphoenolpyruvate = 5-O-(1-carboxyvinyl)-3-phosphoshikimate + phosphate. Its pathway is metabolic intermediate biosynthesis; chorismate biosynthesis; chorismate from D-erythrose 4-phosphate and phosphoenolpyruvate: step 6/7. Catalyzes the transfer of the enolpyruvyl moiety of phosphoenolpyruvate (PEP) to the 5-hydroxyl of shikimate-3-phosphate (S3P) to produce enolpyruvyl shikimate-3-phosphate and inorganic phosphate. This is 3-phosphoshikimate 1-carboxyvinyltransferase from Staphylococcus aureus (strain JH9).